The following is a 66-amino-acid chain: Beta-toxin Cbo3 (66 aa).

The region spanning 1–66 (KEGYIVNYHD…VWPLPKKTCN (66 aa)) is the LCN-type CS-alpha/beta domain. Intrachain disulfides connect cysteine 12/cysteine 65, cysteine 16/cysteine 41, cysteine 25/cysteine 46, and cysteine 29/cysteine 48. An Asparagine amide modification is found at asparagine 66.

This sequence belongs to the long (4 C-C) scorpion toxin superfamily. Sodium channel inhibitor family. Beta subfamily. In terms of tissue distribution, expressed by the venom gland.

The protein resides in the secreted. In terms of biological role, beta toxins bind voltage-independently at site-4 of sodium channels and shift the voltage of activation toward more negative potentials thereby affecting sodium channel activation and promoting spontaneous and repetitive firing. A mixture of Cbo2 and Cbo3 is weakly active on the human voltage-gated sodium channels Nav1.4/SCN4A and Nav1.6/SCN8A when tested at 200 nM. In vivo, is toxic to mice when intraperitoneally injected. The sequence is that of Beta-toxin Cbo3 from Centruroides bonito (Scorpion).